The sequence spans 633 residues: Chaperone protein HtpG (633 aa).

The segment at 1–341 is a; substrate-binding; the sequence is MTAPHETMSF…SADLPLNVSR (341 aa). Residues 342–562 are b; sequence ELLQESRDVK…DGDMSGYLQR (221 aa). The interval 563-633 is c; the sequence is LLKQAGQKAP…YVQRVNRLLA (71 aa).

This sequence belongs to the heat shock protein 90 family. Homodimer.

The protein resides in the cytoplasm. Molecular chaperone. Has ATPase activity. The polypeptide is Chaperone protein HtpG (Cupriavidus metallidurans (strain ATCC 43123 / DSM 2839 / NBRC 102507 / CH34) (Ralstonia metallidurans)).